The following is a 355-amino-acid chain: 3-isopropylmalate dehydrogenase (355 aa).

Substrate-binding residues include arginine 98, arginine 108, arginine 132, and aspartate 223. Mg(2+) is bound by residues aspartate 223, aspartate 247, and aspartate 251. 283-295 is a binding site for NAD(+); sequence GSAPDIAGQQKAD.

This sequence belongs to the isocitrate and isopropylmalate dehydrogenases family. LeuB type 2 subfamily. In terms of assembly, homodimer. Mg(2+) serves as cofactor. It depends on Mn(2+) as a cofactor.

It is found in the cytoplasm. It catalyses the reaction (2R,3S)-3-isopropylmalate + NAD(+) = 4-methyl-2-oxopentanoate + CO2 + NADH. It participates in amino-acid biosynthesis; L-leucine biosynthesis; L-leucine from 3-methyl-2-oxobutanoate: step 3/4. In terms of biological role, catalyzes the oxidation of 3-carboxy-2-hydroxy-4-methylpentanoate (3-isopropylmalate) to 3-carboxy-4-methyl-2-oxopentanoate. The product decarboxylates to 4-methyl-2 oxopentanoate. The protein is 3-isopropylmalate dehydrogenase of Clavibacter michiganensis subsp. michiganensis (strain NCPPB 382).